The chain runs to 414 residues: 2-epi-5-epi-valiolone synthase (414 aa).

Residues Asp-70, 101 to 104, 134 to 138, 158 to 159, Lys-171, Lys-180, and 198 to 201 contribute to the NAD(+) site; these read ESAK, GVLTD, TT, and FLAT. The active site involves Lys-171. Positions 213, 284, and 300 each coordinate Zn(2+).

Belongs to the sugar phosphate cyclases superfamily. EEVS family. Requires NAD(+) as cofactor. Zn(2+) serves as cofactor.

The catalysed reaction is D-sedoheptulose 7-phosphate = 2-epi-5-epi-valiolone + phosphate. Its pathway is antibiotic biosynthesis. Its function is as follows. Catalyzes the cyclization of D-sedoheptulose 7-phosphate to 2-epi-5-epi-valiolone. Involved in validamycin biosynthesis. The protein is 2-epi-5-epi-valiolone synthase of Streptomyces hygroscopicus subsp. jinggangensis (strain 5008).